We begin with the raw amino-acid sequence, 446 residues long: MMITLRKLPLAVAVAAGVMSAQAMAVDFHGYARSGIGWTGSGGEQQCFQTTGAQSKYRLGNECETYAELKLGQEVWKEGDKSFYFDTNVAYSVAQQNDWEATDPAFREANVQGKNLIEWLPGSTIWAGKRFYQRHDVHMIDFYYWDISGPGAGLENIDVGFGKLSLAATRSSEAGGSSSFASNNIYDYTNETANDVFDVRLAQMEINPGGTLELGVDYGRANLRDNYRLVDGASKDGWLFTAEHTQSVLKGFNKFVVQYATDSMTSQGKGLSQGSGVAFDNEKFAYNINNNGHMLRILDHGAISMGDNWDMMYVGMYQDINWDNDNGTKWWTVGIRPMYKWTPIMSTVMEIGYDNVESQRTGDKNNQYKITLAQQWQAGDSIWSRPAIRVFATYAKWDEKWGYDYNGDSKVNPNYGKAVPADFNGGSFGRGDSDEWTFGAQMEIWW.

Positions 1 to 25 are cleaved as a signal peptide; that stretch reads MMITLRKLPLAVAVAAGVMSAQAMA.

This sequence belongs to the porin LamB (TC 1.B.3) family. In terms of assembly, homotrimer formed of three 18-stranded antiparallel beta-barrels, containing three independent channels.

Its subcellular location is the cell outer membrane. The enzyme catalyses beta-maltose(in) = beta-maltose(out). Involved in the transport of maltose and maltodextrins. The protein is Maltoporin of Escherichia coli O8 (strain IAI1).